A 103-amino-acid chain; its full sequence is Protein RALF-like 18 (103 aa).

Residues 1 to 32 (MMNNMKLLIIAVMIISAALLPALVVGSRPVKC) form the signal peptide. Positions 33–58 (DNCMDGGEKEEIMKMSSGVDVSHRIL) are cleaved as a propeptide — removed in mature form. A disulfide bridge connects residues cysteine 92 and cysteine 98.

It belongs to the plant rapid alkalinization factor (RALF) family. Proteolytically cleaved, probably by S1P, a subtilisin-like serine protease (subtilase).

The protein resides in the secreted. In terms of biological role, cell signaling peptide that may regulate plant stress, growth, and development. Mediates a rapid alkalinization of extracellular space by mediating a transient increase in the cytoplasmic Ca(2+) concentration leading to a calcium-dependent signaling events through a cell surface receptor and a concomitant activation of some intracellular mitogen-activated protein kinases. This chain is Protein RALF-like 18 (RALFL18), found in Arabidopsis thaliana (Mouse-ear cress).